A 355-amino-acid polypeptide reads, in one-letter code: Sesquiterpene synthase MAJ_08936 (355 aa).

Mg(2+) contacts are provided by aspartate 91 and aspartate 96. The DDXXXD motif signature appears at 91–96 (DDLFVD). Arginine 184 serves as a coordination point for substrate. Residues asparagine 230, serine 234, and glutamate 238 each contribute to the Mg(2+) site.

Belongs to the terpene synthase family. Mg(2+) serves as cofactor.

It catalyses the reaction (2E,6E)-farnesyl diphosphate + H2O = (+)-corvol ether B + diphosphate. The catalysed reaction is (2E,6E)-farnesyl diphosphate + H2O = (+)-corvol ether A + diphosphate. In terms of biological role, terpene synthase that catalyzes the conversion of (2E,6E)-farnesyl diphosphate (FPP) into sesquiterpenes which are important for fungi-environment interactions. Produces a mixture consisting of 8 sesquiterpenes including corvol ethers A and B, as well as traces of epizonarene, gamma-cadinene, delta-cadinene, alpha-cadinene, alpha-cadinol, and an unidentified sesquiterpene. The major product is corvol ether A. This Metarhizium majus (strain ARSEF 297) protein is Sesquiterpene synthase MAJ_08936.